A 365-amino-acid chain; its full sequence is Membrane-bound lytic murein transglycosylase C (365 aa).

The first 19 residues, 1–19 (MKKYTKYLPLLLIIPFLAA), serve as a signal peptide directing secretion. The N-palmitoyl cysteine moiety is linked to residue Cys-20. Cys-20 carries S-diacylglycerol cysteine lipidation.

Belongs to the transglycosylase Slt family.

Its subcellular location is the cell outer membrane. The enzyme catalyses Exolytic cleavage of the (1-&gt;4)-beta-glycosidic linkage between N-acetylmuramic acid (MurNAc) and N-acetylglucosamine (GlcNAc) residues in peptidoglycan, from either the reducing or the non-reducing ends of the peptidoglycan chains, with concomitant formation of a 1,6-anhydrobond in the MurNAc residue.. Functionally, murein-degrading enzyme. May play a role in recycling of muropeptides during cell elongation and/or cell division. In Actinobacillus pleuropneumoniae serotype 5b (strain L20), this protein is Membrane-bound lytic murein transglycosylase C.